The following is a 391-amino-acid chain: Thyroid hormone receptor alpha-B (391 aa).

Positions Met-1–Pro-32 are modulating. NR C4-type zinc fingers lie at residues Cys-33–Cys-53 and Cys-71–Cys-95. The nuclear receptor DNA-binding region spans Cys-33–Met-100. Residues Ala-143–Asp-388 enclose the NR LBD domain.

It belongs to the nuclear hormone receptor family. NR1 subfamily.

The protein resides in the nucleus. Functionally, high affinity receptor for triiodothyronine. The polypeptide is Thyroid hormone receptor alpha-B (thra2) (Paralichthys olivaceus (Bastard halibut)).